A 273-amino-acid chain; its full sequence is Dermonecrotic toxin LdSicTox-alphaIB1aii (273 aa).

Histidine 5 is an active-site residue. Mg(2+) contacts are provided by glutamate 25 and aspartate 27. Histidine 41 (nucleophile) is an active-site residue. 2 cysteine pairs are disulfide-bonded: cysteine 45/cysteine 51 and cysteine 47/cysteine 190. Position 85 (aspartate 85) interacts with Mg(2+). Asparagine 250 carries an N-linked (GlcNAc...) asparagine glycan.

This sequence belongs to the arthropod phospholipase D family. Class II subfamily. Mg(2+) is required as a cofactor. In terms of tissue distribution, expressed by the venom gland.

Its subcellular location is the secreted. The catalysed reaction is an N-(acyl)-sphingosylphosphocholine = an N-(acyl)-sphingosyl-1,3-cyclic phosphate + choline. The enzyme catalyses an N-(acyl)-sphingosylphosphoethanolamine = an N-(acyl)-sphingosyl-1,3-cyclic phosphate + ethanolamine. It carries out the reaction a 1-acyl-sn-glycero-3-phosphocholine = a 1-acyl-sn-glycero-2,3-cyclic phosphate + choline. It catalyses the reaction a 1-acyl-sn-glycero-3-phosphoethanolamine = a 1-acyl-sn-glycero-2,3-cyclic phosphate + ethanolamine. Functionally, dermonecrotic toxins cleave the phosphodiester linkage between the phosphate and headgroup of certain phospholipids (sphingolipid and lysolipid substrates), forming an alcohol (often choline) and a cyclic phosphate. This toxin acts on sphingomyelin (SM). It may also act on ceramide phosphoethanolamine (CPE), lysophosphatidylcholine (LPC) and lysophosphatidylethanolamine (LPE), but not on lysophosphatidylserine (LPS), and lysophosphatidylglycerol (LPG). It acts by transphosphatidylation, releasing exclusively cyclic phosphate products as second products. Induces dermonecrosis, hemolysis, increased vascular permeability, edema, inflammatory response, and platelet aggregation. This Loxosceles deserta (Desert recluse spider) protein is Dermonecrotic toxin LdSicTox-alphaIB1aii.